The chain runs to 139 residues: Putative pre-16S rRNA nuclease (139 aa).

The protein belongs to the YqgF nuclease family.

It is found in the cytoplasm. Its function is as follows. Could be a nuclease involved in processing of the 5'-end of pre-16S rRNA. This chain is Putative pre-16S rRNA nuclease, found in Streptococcus gordonii (strain Challis / ATCC 35105 / BCRC 15272 / CH1 / DL1 / V288).